Consider the following 135-residue polypeptide: Probable histone H2A.2 (135 aa).

It belongs to the histone H2A family. The nucleosome is a histone octamer containing two molecules each of H2A, H2B, H3 and H4 assembled in one H3-H4 heterotetramer and two H2A-H2B heterodimers. The octamer wraps approximately 147 bp of DNA.

It is found in the nucleus. It localises to the chromosome. In terms of biological role, core component of nucleosome. Nucleosomes wrap and compact DNA into chromatin, limiting DNA accessibility to the cellular machineries which require DNA as a template. Histones thereby play a central role in transcription regulation, DNA repair, DNA replication and chromosomal stability. DNA accessibility is regulated via a complex set of post-translational modifications of histones, also called histone code, and nucleosome remodeling. This Oryza sativa subsp. indica (Rice) protein is Probable histone H2A.2.